Here is a 401-residue protein sequence, read N- to C-terminus: Glucose-6-phosphate isomerase (401 aa).

Catalysis depends on E261, which acts as the Proton donor. Catalysis depends on residues H282 and K392.

The protein belongs to the GPI family. In terms of assembly, homodimer.

The protein resides in the cytoplasm. It catalyses the reaction alpha-D-glucose 6-phosphate = beta-D-fructose 6-phosphate. It functions in the pathway carbohydrate biosynthesis; gluconeogenesis. The protein operates within carbohydrate degradation; glycolysis; D-glyceraldehyde 3-phosphate and glycerone phosphate from D-glucose: step 2/4. Competively inhibited by 6-phosphogluconate and erythrose 4-phosphate. Functionally, catalyzes the isomerization of glucose-6-P to fructose-6-P. This Methanocaldococcus jannaschii (strain ATCC 43067 / DSM 2661 / JAL-1 / JCM 10045 / NBRC 100440) (Methanococcus jannaschii) protein is Glucose-6-phosphate isomerase.